Consider the following 690-residue polypeptide: Potassium-transporting ATPase ATP-binding subunit (690 aa).

Residues 1 to 23 (MNSTSTVRQPGGPRQQRRHTPKA) are disordered. 4 helical membrane passes run 44-64 (IMVKNPVMFMVWVGTLITGML), 78-98 (AMFNGLVTVILLFTVLFANFA), 233-253 (IALTVLLAVLTLVFLIVVATL), and 268-288 (LLIALLVALIPTTIGGLLSAI). The active-site 4-aspartylphosphate intermediate is Asp-321. Residues Asp-358, Glu-362, 389–396 (FSARTRMS), and Lys-408 contribute to the ATP site. Mg(2+) is bound by residues Asp-531 and Asp-535. A run of 3 helical transmembrane segments spans residues 601–621 (FAIIPAMFAGIGIGALNIMDL), 627–647 (AVLSALIYNALIIPALIPLAL), and 665–685 (ILVYGLGGIIVPFVAIKLIDL).

The protein belongs to the cation transport ATPase (P-type) (TC 3.A.3) family. Type IA subfamily. The system is composed of three essential subunits: KdpA, KdpB and KdpC.

The protein localises to the cell inner membrane. It catalyses the reaction K(+)(out) + ATP + H2O = K(+)(in) + ADP + phosphate + H(+). In terms of biological role, part of the high-affinity ATP-driven potassium transport (or Kdp) system, which catalyzes the hydrolysis of ATP coupled with the electrogenic transport of potassium into the cytoplasm. This subunit is responsible for energy coupling to the transport system and for the release of the potassium ions to the cytoplasm. The sequence is that of Potassium-transporting ATPase ATP-binding subunit from Synechocystis sp. (strain ATCC 27184 / PCC 6803 / Kazusa).